The following is a 121-amino-acid chain: Pro-glucagon (121 aa).

A signal peptide spans 1 to 21 (MKGAQYLAGLLLLLFVQNSIC). A propeptide spanning residues 80–85 (SNGGSA) is cleaved from the precursor.

This sequence belongs to the glucagon family.

It localises to the secreted. Plays a key role in glucose metabolism and homeostasis. Regulates blood glucose by increasing gluconeogenesis and decreasing glycolysis. This Carassius auratus (Goldfish) protein is Pro-glucagon (gcg).